The primary structure comprises 77 residues: Delta-conotoxin GmVIA (77 aa).

A signal peptide spans 1 to 22; the sequence is MKLTCMMIVAVLFLTAWTFVTA. Residues 23-48 constitute a propeptide that is removed on maturation; it reads DDSGNGMEILFPKAGHEMENLEVSNR. 3 disulfide bridges follow: cysteine 52-cysteine 67, cysteine 59-cysteine 72, and cysteine 66-cysteine 76.

This sequence belongs to the conotoxin O1 superfamily. Expressed by the venom duct.

It localises to the secreted. In terms of biological role, delta-conotoxins bind to site 6 of voltage-gated sodium channels (Nav) and inhibit the inactivation process. This toxin shows weak activity on rNav1.2/SCN2A (EC(50)=2.5 uM) and rNav1.4/SCN4A (EC(50)=4.8 uM). In vivo, injection of this peptide in the head region of garden snail induces retraction of the head and body into shell. This is followed by secretion of viscous green slime and a convulsive undulation into and out of the shell. No apparent biological activity was observed when a much greater dose of peptide was injected intraperitoneally into mice. This chain is Delta-conotoxin GmVIA, found in Conus gloriamaris (Glory-of-the-Sea cone).